The primary structure comprises 428 residues: GTPase Obg (428 aa).

The region spanning 1-158 is the Obg domain; that stretch reads MFIDTAKIFV…RWVALELKLL (158 aa). One can recognise an OBG-type G domain in the interval 159 to 331; it reads ADVGLLGFPN…VIKEAARMLK (173 aa). GTP contacts are provided by residues 165-172, 190-194, 212-215, 282-285, and 312-314; these read GFPNVGKS, FTTLK, DVPG, NKCD, and SAA. Mg(2+) is bound by residues Ser172 and Thr192. The OCT domain maps to 345 to 428; sequence RFIPEDKKFT…LNDFEFEYLL (84 aa).

This sequence belongs to the TRAFAC class OBG-HflX-like GTPase superfamily. OBG GTPase family. Monomer. Mg(2+) is required as a cofactor.

It localises to the cytoplasm. Its function is as follows. An essential GTPase which binds GTP, GDP and possibly (p)ppGpp with moderate affinity, with high nucleotide exchange rates and a fairly low GTP hydrolysis rate. Plays a role in control of the cell cycle, stress response, ribosome biogenesis and in those bacteria that undergo differentiation, in morphogenesis control. The chain is GTPase Obg from Clostridium perfringens (strain ATCC 13124 / DSM 756 / JCM 1290 / NCIMB 6125 / NCTC 8237 / Type A).